The chain runs to 257 residues: Phosphate import ATP-binding protein PstB (257 aa).

In terms of domain architecture, ABC transporter spans 11–252 (FNISRLYLYI…PKNELTEKYV (242 aa)). Residue 43-50 (GPSGSGKS) participates in ATP binding.

It belongs to the ABC transporter superfamily. Phosphate importer (TC 3.A.1.7) family. The complex is composed of two ATP-binding proteins (PstB), two transmembrane proteins (PstC and PstA) and a solute-binding protein (PstS).

Its subcellular location is the cell membrane. It carries out the reaction phosphate(out) + ATP + H2O = ADP + 2 phosphate(in) + H(+). In terms of biological role, part of the ABC transporter complex PstSACB involved in phosphate import. Responsible for energy coupling to the transport system. This Saccharolobus solfataricus (strain ATCC 35092 / DSM 1617 / JCM 11322 / P2) (Sulfolobus solfataricus) protein is Phosphate import ATP-binding protein PstB.